The following is a 347-amino-acid chain: Anthranilate phosphoribosyltransferase (347 aa).

5-phospho-alpha-D-ribose 1-diphosphate contacts are provided by residues Gly-88, Gly-91–Asp-92, Thr-96, Asn-98–Thr-101, Lys-116–Ser-124, and Ser-128. Gly-88 provides a ligand contact to anthranilate. Ser-100 serves as a coordination point for Mg(2+). Residue Asn-119 participates in anthranilate binding. Arg-174 contributes to the anthranilate binding site. The Mg(2+) site is built by Asp-233 and Glu-234.

This sequence belongs to the anthranilate phosphoribosyltransferase family. As to quaternary structure, homodimer. Requires Mg(2+) as cofactor.

The catalysed reaction is N-(5-phospho-beta-D-ribosyl)anthranilate + diphosphate = 5-phospho-alpha-D-ribose 1-diphosphate + anthranilate. It functions in the pathway amino-acid biosynthesis; L-tryptophan biosynthesis; L-tryptophan from chorismate: step 2/5. Its function is as follows. Catalyzes the transfer of the phosphoribosyl group of 5-phosphorylribose-1-pyrophosphate (PRPP) to anthranilate to yield N-(5'-phosphoribosyl)-anthranilate (PRA). This Rhodospirillum rubrum (strain ATCC 11170 / ATH 1.1.1 / DSM 467 / LMG 4362 / NCIMB 8255 / S1) protein is Anthranilate phosphoribosyltransferase.